We begin with the raw amino-acid sequence, 341 residues long: Methionine import ATP-binding protein MetN (341 aa).

In terms of domain architecture, ABC transporter spans 2 to 241 (IELNQVVKRY…PQHEVTRRFV (240 aa)). Residue 38-45 (GFSGAGKS) coordinates ATP.

The protein belongs to the ABC transporter superfamily. Methionine importer (TC 3.A.1.24) family. As to quaternary structure, the complex is composed of two ATP-binding proteins (MetN), two transmembrane proteins (MetI) and a solute-binding protein (MetQ).

Its subcellular location is the cell membrane. It carries out the reaction L-methionine(out) + ATP + H2O = L-methionine(in) + ADP + phosphate + H(+). The enzyme catalyses D-methionine(out) + ATP + H2O = D-methionine(in) + ADP + phosphate + H(+). In terms of biological role, part of the ABC transporter complex MetNIQ involved in methionine import. Responsible for energy coupling to the transport system. This Staphylococcus haemolyticus (strain JCSC1435) protein is Methionine import ATP-binding protein MetN.